The chain runs to 278 residues: NAD-capped RNA hydrolase NudC (278 aa).

R84 lines the substrate pocket. C114 and C117 together coordinate Zn(2+). E127 provides a ligand contact to substrate. Residues C132 and C135 each contribute to the Zn(2+) site. Substrate is bound at residue Y140. Residues 141 to 265 (PRLSPSMIVL…IARHLIDLYL (125 aa)) form the Nudix hydrolase domain. Residues A174, E190, and E194 each contribute to the a divalent metal cation site. Positions 175–196 (GFVEAGESVEQCVVREVREEVG) match the Nudix box motif. 208–215 (QNWPFPHS) contacts substrate. Residue E235 coordinates a divalent metal cation. Substrate is bound at residue A257.

This sequence belongs to the Nudix hydrolase family. NudC subfamily. Homodimer. Mg(2+) is required as a cofactor. It depends on Mn(2+) as a cofactor. Requires Zn(2+) as cofactor.

The catalysed reaction is a 5'-end NAD(+)-phospho-ribonucleoside in mRNA + H2O = a 5'-end phospho-adenosine-phospho-ribonucleoside in mRNA + beta-nicotinamide D-ribonucleotide + 2 H(+). It carries out the reaction NAD(+) + H2O = beta-nicotinamide D-ribonucleotide + AMP + 2 H(+). The enzyme catalyses NADH + H2O = reduced beta-nicotinamide D-ribonucleotide + AMP + 2 H(+). In terms of biological role, mRNA decapping enzyme that specifically removes the nicotinamide adenine dinucleotide (NAD) cap from a subset of mRNAs by hydrolyzing the diphosphate linkage to produce nicotinamide mononucleotide (NMN) and 5' monophosphate mRNA. The NAD-cap is present at the 5'-end of some mRNAs and stabilizes RNA against 5'-processing. Has preference for mRNAs with a 5'-end purine. Catalyzes the hydrolysis of a broad range of dinucleotide pyrophosphates. The protein is NAD-capped RNA hydrolase NudC of Pseudomonas aeruginosa (strain ATCC 15692 / DSM 22644 / CIP 104116 / JCM 14847 / LMG 12228 / 1C / PRS 101 / PAO1).